Here is a 143-residue protein sequence, read N- to C-terminus: Ribonuclease H (143 aa).

The 136-residue stretch at 1-136 (MQEIEIFCDG…CDSLAKLEAQ (136 aa)) folds into the RNase H type-1 domain. 4 residues coordinate Mg(2+): aspartate 9, glutamate 47, aspartate 69, and aspartate 128.

The protein belongs to the RNase H family. In terms of assembly, monomer. The cofactor is Mg(2+).

The protein localises to the cytoplasm. It carries out the reaction Endonucleolytic cleavage to 5'-phosphomonoester.. In terms of biological role, endonuclease that specifically degrades the RNA of RNA-DNA hybrids. The sequence is that of Ribonuclease H from Helicobacter pylori (strain HPAG1).